The sequence spans 496 residues: Glycerol kinase (496 aa).

Thr-12 provides a ligand contact to ADP. Residues Thr-12, Thr-13, and Ser-14 each contribute to the ATP site. Thr-12 is a sn-glycerol 3-phosphate binding site. Arg-16 is an ADP binding site. Sn-glycerol 3-phosphate-binding residues include Arg-82, Glu-83, and Tyr-134. Glycerol contacts are provided by Arg-82, Glu-83, and Tyr-134. Position 230 is a phosphohistidine; by HPr (His-230). Residue Asp-244 participates in sn-glycerol 3-phosphate binding. Positions 244 and 245 each coordinate glycerol. Thr-266 and Gly-309 together coordinate ADP. ATP contacts are provided by Thr-266, Gly-309, Gln-313, and Gly-410. 2 residues coordinate ADP: Gly-410 and Asn-414.

It belongs to the FGGY kinase family. As to quaternary structure, homotetramer and homodimer (in equilibrium). The phosphoenolpyruvate-dependent sugar phosphotransferase system (PTS), including enzyme I, and histidine-containing protein (HPr) are required for the phosphorylation, which leads to the activation of the enzyme.

The catalysed reaction is glycerol + ATP = sn-glycerol 3-phosphate + ADP + H(+). It participates in polyol metabolism; glycerol degradation via glycerol kinase pathway; sn-glycerol 3-phosphate from glycerol: step 1/1. Activated by phosphorylation and inhibited by fructose 1,6-bisphosphate (FBP). In terms of biological role, key enzyme in the regulation of glycerol uptake and metabolism. Catalyzes the phosphorylation of glycerol to yield sn-glycerol 3-phosphate. The chain is Glycerol kinase from Bacillus thuringiensis (strain Al Hakam).